A 925-amino-acid polypeptide reads, in one-letter code: Isoleucine--tRNA ligase (925 aa).

A 'HIGH' region motif is present at residues 57–67; that stretch reads PYANGDIHMGH. Position 556 (E556) interacts with L-isoleucyl-5'-AMP. The 'KMSKS' region motif lies at 597 to 601; it reads KMSKS. ATP is bound at residue K600. Zn(2+)-binding residues include C890, C893, C910, and C913.

This sequence belongs to the class-I aminoacyl-tRNA synthetase family. IleS type 1 subfamily. Monomer. Zn(2+) serves as cofactor.

Its subcellular location is the cytoplasm. It catalyses the reaction tRNA(Ile) + L-isoleucine + ATP = L-isoleucyl-tRNA(Ile) + AMP + diphosphate. In terms of biological role, catalyzes the attachment of isoleucine to tRNA(Ile). As IleRS can inadvertently accommodate and process structurally similar amino acids such as valine, to avoid such errors it has two additional distinct tRNA(Ile)-dependent editing activities. One activity is designated as 'pretransfer' editing and involves the hydrolysis of activated Val-AMP. The other activity is designated 'posttransfer' editing and involves deacylation of mischarged Val-tRNA(Ile). This Carboxydothermus hydrogenoformans (strain ATCC BAA-161 / DSM 6008 / Z-2901) protein is Isoleucine--tRNA ligase.